A 168-amino-acid polypeptide reads, in one-letter code: Photosystem I assembly protein Ycf3 (168 aa).

TPR repeat units lie at residues 35 to 68, 72 to 105, and 120 to 153; these read AFTY…EIDP, SYIL…NPFL, and GEQA…TPGN.

The protein belongs to the Ycf3 family.

It localises to the plastid. The protein localises to the chloroplast thylakoid membrane. In terms of biological role, essential for the assembly of the photosystem I (PSI) complex. May act as a chaperone-like factor to guide the assembly of the PSI subunits. The sequence is that of Photosystem I assembly protein Ycf3 from Oenothera elata subsp. hookeri (Hooker's evening primrose).